A 417-amino-acid chain; its full sequence is NADH-quinone oxidoreductase subunit D (417 aa).

This sequence belongs to the complex I 49 kDa subunit family. NDH-1 is composed of 14 different subunits. Subunits NuoB, C, D, E, F, and G constitute the peripheral sector of the complex.

The protein resides in the cell inner membrane. It catalyses the reaction a quinone + NADH + 5 H(+)(in) = a quinol + NAD(+) + 4 H(+)(out). In terms of biological role, NDH-1 shuttles electrons from NADH, via FMN and iron-sulfur (Fe-S) centers, to quinones in the respiratory chain. The immediate electron acceptor for the enzyme in this species is believed to be ubiquinone. Couples the redox reaction to proton translocation (for every two electrons transferred, four hydrogen ions are translocated across the cytoplasmic membrane), and thus conserves the redox energy in a proton gradient. The chain is NADH-quinone oxidoreductase subunit D from Cupriavidus taiwanensis (strain DSM 17343 / BCRC 17206 / CCUG 44338 / CIP 107171 / LMG 19424 / R1) (Ralstonia taiwanensis (strain LMG 19424)).